Reading from the N-terminus, the 326-residue chain is GTP 3',8-cyclase (326 aa).

Residues 5 to 227 (GHGRTVDYLR…ALGREGASPS (223 aa)) form the Radical SAM core domain. R14 provides a ligand contact to GTP. Residues C21 and C25 each contribute to the [4Fe-4S] cluster site. Y27 lines the S-adenosyl-L-methionine pocket. A [4Fe-4S] cluster-binding site is contributed by C28. R64 is a binding site for GTP. G68 is a binding site for S-adenosyl-L-methionine. T95 contributes to the GTP binding site. S119 contributes to the S-adenosyl-L-methionine binding site. K155 lines the GTP pocket. M189 provides a ligand contact to S-adenosyl-L-methionine. Residues C250 and C253 each contribute to the [4Fe-4S] cluster site. 255-257 (RIR) lines the GTP pocket. C267 contributes to the [4Fe-4S] cluster binding site.

The protein belongs to the radical SAM superfamily. MoaA family. As to quaternary structure, monomer and homodimer. [4Fe-4S] cluster serves as cofactor.

The enzyme catalyses GTP + AH2 + S-adenosyl-L-methionine = (8S)-3',8-cyclo-7,8-dihydroguanosine 5'-triphosphate + 5'-deoxyadenosine + L-methionine + A + H(+). It functions in the pathway cofactor biosynthesis; molybdopterin biosynthesis. Functionally, catalyzes the cyclization of GTP to (8S)-3',8-cyclo-7,8-dihydroguanosine 5'-triphosphate. The protein is GTP 3',8-cyclase of Sulfurovum sp. (strain NBC37-1).